The chain runs to 202 residues: ER membrane protein complex subunit 7 homolog (202 aa).

A signal peptide spans 1–23 (MAPIFRSTSLIAFSLFFFFFAST). The chain crosses the membrane as a helical span at residues 148–168 (IVKSPMGLMVGFMVVVVFLMP). Residues 179-202 (MKSAQEQMRSQGVPSLTSLLPASR) form a disordered region. Residues 182–202 (AQEQMRSQGVPSLTSLLPASR) are compositionally biased toward polar residues.

The protein belongs to the EMC7 family.

It localises to the membrane. This chain is ER membrane protein complex subunit 7 homolog, found in Arabidopsis thaliana (Mouse-ear cress).